The following is a 385-amino-acid chain: Acetylornithine aminotransferase (385 aa).

Pyridoxal 5'-phosphate contacts are provided by residues 94-95 and Phe-126; that span reads GT. Position 129 (Arg-129) interacts with N(2)-acetyl-L-ornithine. 211–214 lines the pyridoxal 5'-phosphate pocket; it reads DEVQ. Lys-240 bears the N6-(pyridoxal phosphate)lysine mark. Thr-267 contacts N(2)-acetyl-L-ornithine. Thr-268 provides a ligand contact to pyridoxal 5'-phosphate.

Belongs to the class-III pyridoxal-phosphate-dependent aminotransferase family. ArgD subfamily. As to quaternary structure, homodimer. The cofactor is pyridoxal 5'-phosphate.

Its subcellular location is the cytoplasm. It catalyses the reaction N(2)-acetyl-L-ornithine + 2-oxoglutarate = N-acetyl-L-glutamate 5-semialdehyde + L-glutamate. It participates in amino-acid biosynthesis; L-arginine biosynthesis; N(2)-acetyl-L-ornithine from L-glutamate: step 4/4. The polypeptide is Acetylornithine aminotransferase (Thermotoga maritima (strain ATCC 43589 / DSM 3109 / JCM 10099 / NBRC 100826 / MSB8)).